The sequence spans 71 residues: uncharacterized protein (71 aa).

It is found in the plastid. Its subcellular location is the chloroplast. This is an uncharacterized protein from Mesostigma viride (Green alga).